The chain runs to 593 residues: MTADNALYIPPYKADDQDVVVELNTHFGAEAFTAQPTRTGMPVLWVERARLFEILTFLRNVPKPYSMLYDLHGVDERLRTNRRGLPGADFTVFYHLLSIERNSDVMIKVALSESDLSVPTITSIWPNANWYEREVWDMFGIDFPGHPHLSRIMMPPTWEGHPLRKDFPARATELDPYSLTLAKQQLEEEAARFRPEDWGMKRSGANEDYMFLNLGPNHPSAHGAFRIILQLDGEEIVDCVPDIGYHHRGAEKMAERQSWHSFIPYTDRIDYLGGVMNNLPYVLSVEKLAGIKVPEKVDVIRIMMAEFFRITSHLLFLGTYIQDVGAMTPVFFTFTDRQKAYTVIEAITGFRLHPAWYRIGGVAHDLPRGWEKLVKDFVDWLPKRLDEYTKAALQNSILKGRTVGVAAYNTKEALEWGVTGAGLRSTGCDFDLRKARPYSGYENFEFEVPLAANGDAYDRCMVRVEEMRQSIKIIDQCMRNMPEGPYKADHPLTTPPPKERTLQHIETLITHFLQVSWGPVMPANESFQMIEATKGINSYYLTSDGGTMSYRTRIRTPSYPHLQQIPSVIKGSMVADLIAYLGSIDFVMADVDR.

Positions 1-184 (MTADNALYIP…DPYSLTLAKQ (184 aa)) are NADH dehydrogenase I subunit C. The segment at 208–593 (DYMFLNLGPN…IDFVMADVDR (386 aa)) is NADH dehydrogenase I subunit D.

It in the N-terminal section; belongs to the complex I 30 kDa subunit family. The protein in the C-terminal section; belongs to the complex I 49 kDa subunit family. In terms of assembly, NDH-1 is composed of 13 different subunits. Subunits NuoB, CD, E, F, and G constitute the peripheral sector of the complex.

Its subcellular location is the cell inner membrane. The catalysed reaction is a quinone + NADH + 5 H(+)(in) = a quinol + NAD(+) + 4 H(+)(out). Functionally, NDH-1 shuttles electrons from NADH, via FMN and iron-sulfur (Fe-S) centers, to quinones in the respiratory chain. The immediate electron acceptor for the enzyme in this species is believed to be ubiquinone. Couples the redox reaction to proton translocation (for every two electrons transferred, four hydrogen ions are translocated across the cytoplasmic membrane), and thus conserves the redox energy in a proton gradient. In Pseudomonas savastanoi pv. phaseolicola (strain 1448A / Race 6) (Pseudomonas syringae pv. phaseolicola (strain 1448A / Race 6)), this protein is NADH-quinone oxidoreductase subunit C/D.